The sequence spans 141 residues: Large ribosomal subunit protein uL11 (141 aa).

The protein belongs to the universal ribosomal protein uL11 family. In terms of assembly, part of the ribosomal stalk of the 50S ribosomal subunit. Interacts with L10 and the large rRNA to form the base of the stalk. L10 forms an elongated spine to which L12 dimers bind in a sequential fashion forming a multimeric L10(L12)X complex. Post-translationally, one or more lysine residues are methylated.

Its function is as follows. Forms part of the ribosomal stalk which helps the ribosome interact with GTP-bound translation factors. The sequence is that of Large ribosomal subunit protein uL11 from Cyanothece sp. (strain PCC 7425 / ATCC 29141).